Reading from the N-terminus, the 496-residue chain is Galactose-1-phosphate uridylyltransferase (496 aa).

Belongs to the galactose-1-phosphate uridylyltransferase type 2 family.

The protein localises to the cytoplasm. The enzyme catalyses alpha-D-galactose 1-phosphate + UDP-alpha-D-glucose = alpha-D-glucose 1-phosphate + UDP-alpha-D-galactose. Its pathway is carbohydrate metabolism; galactose metabolism. The polypeptide is Galactose-1-phosphate uridylyltransferase (Staphylococcus saprophyticus subsp. saprophyticus (strain ATCC 15305 / DSM 20229 / NCIMB 8711 / NCTC 7292 / S-41)).